Consider the following 143-residue polypeptide: uncharacterized protein (143 aa).

Residues 65–85 form a helical membrane-spanning segment; sequence LVWMLVGTIVLSLDIIFPALV.

It is found in the membrane. This is an uncharacterized protein from Saccharomyces cerevisiae (strain ATCC 204508 / S288c) (Baker's yeast).